Here is a 302-residue protein sequence, read N- to C-terminus: tRNA dimethylallyltransferase (302 aa).

2–9 (GPTACGKS) provides a ligand contact to ATP. 4 to 9 (TACGKS) contributes to the substrate binding site. 2 interaction with substrate tRNA regions span residues 27–30 (DSAL) and 149–153 (QRLIR).

The protein belongs to the IPP transferase family. Monomer. Requires Mg(2+) as cofactor.

It carries out the reaction adenosine(37) in tRNA + dimethylallyl diphosphate = N(6)-dimethylallyladenosine(37) in tRNA + diphosphate. In terms of biological role, catalyzes the transfer of a dimethylallyl group onto the adenine at position 37 in tRNAs that read codons beginning with uridine, leading to the formation of N6-(dimethylallyl)adenosine (i(6)A). The protein is tRNA dimethylallyltransferase of Buchnera aphidicola subsp. Acyrthosiphon pisum (strain 5A).